The following is a 37-amino-acid chain: U1-ectatotoxin-Eb1a subunit B (37 aa).

It belongs to the ectatomin family. Ectatomin-Eq subfamily. Heterodimer of subunits A and B; disulfide-linked. In terms of tissue distribution, expressed by the venom gland.

It localises to the secreted. The protein localises to the target cell membrane. The sequence is that of U1-ectatotoxin-Eb1a subunit B from Ectatomma brunneum (Ant).